A 486-amino-acid chain; its full sequence is Argininosuccinate lyase (486 aa).

This sequence belongs to the lyase 1 family. Argininosuccinate lyase subfamily.

The protein resides in the cytoplasm. It carries out the reaction 2-(N(omega)-L-arginino)succinate = fumarate + L-arginine. The protein operates within amino-acid biosynthesis; L-arginine biosynthesis; L-arginine from L-ornithine and carbamoyl phosphate: step 3/3. In Acidobacterium capsulatum (strain ATCC 51196 / DSM 11244 / BCRC 80197 / JCM 7670 / NBRC 15755 / NCIMB 13165 / 161), this protein is Argininosuccinate lyase.